Consider the following 287-residue polypeptide: mRNA-capping enzyme regulatory subunit OPG124 (287 aa).

It belongs to the orthopoxvirus mRNA-capping enzyme regulatory subunit family. As to quaternary structure, interacts with the catalytic subunit OPG113.

The protein resides in the virion. Functionally, regulatory subunit of the mRNA cap enzyme which stabilizes the catalytic subunit and enhances its methyltransferase activity through an allosteric mechanism. Heterodimeric mRNA capping enzyme catalyzes the linkage of a N7-methyl-guanosine moiety to the first transcribed nucleotide (cap 0 structure), whereas the methyltransferase OPG102 is responsible for a second methylation at the 2'-O position of the ribose (cap 1 structure). Also involved in early viral gene transcription termination and intermediate viral gene transcription initiation. Early gene transcription termination requires the termination factor VTF, the DNA-dependent ATPase NPH-I/OPG123 and the RAP94/OPG109 subunit of the viral RNA polymerase, as well as the presence of a specific termination motif. Binds, together with RAP94/OPG109, to the termination motif 5'-UUUUUNU-3' in the nascent early mRNA. The polypeptide is mRNA-capping enzyme regulatory subunit OPG124 (OPG124) (Bos taurus (Bovine)).